The following is a 92-amino-acid chain: MPRPGLKTRSKRRVYVRTPGGKVVIHYEPRKPGPARCAICGKPLNGVPRLIPSKLRKLAKTEKRPERPYGGYICPRCLSRLLRESIRASISS.

The protein belongs to the eukaryotic ribosomal protein eL34 family.

The protein is Large ribosomal subunit protein eL34 of Staphylothermus marinus (strain ATCC 43588 / DSM 3639 / JCM 9404 / F1).